A 415-amino-acid chain; its full sequence is Multidrug resistance protein MdtA (415 aa).

The first 21 residues, 1 to 21 (MKGSYKSRWVIVIVVVIAAIA), serve as a signal peptide directing secretion. Polar residues predominate over residues 31–46 (DSQSAAPGATKQAQQS). Disordered regions lie at residues 31–56 (DSQS…GMRA) and 392–415 (EAQS…GARS). The span at 399–415 (PEEKATSREYAKKGARS) shows a compositional bias: basic and acidic residues.

The protein belongs to the membrane fusion protein (MFP) (TC 8.A.1) family. In terms of assembly, part of a tripartite efflux system composed of MdtA, MdtB and MdtC.

Its subcellular location is the cell inner membrane. The MdtABC tripartite complex confers resistance against novobiocin and deoxycholate. The polypeptide is Multidrug resistance protein MdtA (Escherichia coli O6:K15:H31 (strain 536 / UPEC)).